A 338-amino-acid chain; its full sequence is Fructose-1,6-bisphosphatase 1 (338 aa).

A2 is subject to N-acetylalanine. AMP is bound by residues 18–22 (VMEEG) and 28–32 (TGELT). D69 and E98 together coordinate Mg(2+). AMP is bound at residue 113–114 (KY). Mg(2+) contacts are provided by D119, L121, and D122. 122-125 (DGSS) serves as a coordination point for substrate. Residue R141 coordinates AMP. Residue K151 is modified to N6-succinyllysine. Substrate is bound by residues 213-216 (NEGY), 244-249 (RYVGSM), Y265, and 275-277 (KLR). Y216, Y245, and Y265 each carry phosphotyrosine. E281 is a binding site for Mg(2+).

It belongs to the FBPase class 1 family. As to quaternary structure, homotetramer. Requires Mg(2+) as cofactor. As to expression, expressed in pancreatic islets.

The enzyme catalyses beta-D-fructose 1,6-bisphosphate + H2O = beta-D-fructose 6-phosphate + phosphate. The protein operates within carbohydrate biosynthesis; gluconeogenesis. Its activity is regulated as follows. Subject to complex allosteric regulation. The enzyme can assume an active R-state, or an inactive T-state. Intermediate conformations may exist. AMP acts as an allosteric inhibitor. AMP binding affects the turnover of bound substrate and not the affinity for substrate. Fructose 2,6-bisphosphate acts as a competitive inhibitor. Fructose 2,6-bisphosphate and AMP have synergistic effects. Its function is as follows. Catalyzes the hydrolysis of fructose 1,6-bisphosphate to fructose 6-phosphate in the presence of divalent cations, acting as a rate-limiting enzyme in gluconeogenesis. Plays a role in regulating glucose sensing and insulin secretion of pancreatic beta-cells. Appears to modulate glycerol gluconeogenesis in liver. Important regulator of appetite and adiposity; increased expression of the protein in liver after nutrient excess increases circulating satiety hormones and reduces appetite-stimulating neuropeptides and thus seems to provide a feedback mechanism to limit weight gain. This is Fructose-1,6-bisphosphatase 1 (FBP1) from Homo sapiens (Human).